The sequence spans 383 residues: Polyketide synthase 4 (383 aa).

Residue C164 is the Nucleophile and monoketide coumarate intermediate of the active site.

The protein belongs to the thiolase-like superfamily. Chalcone/stilbene synthases family. Homodimer. Expressed in fruits.

It catalyses the reaction 4-coumaroyl-CoA + malonyl-CoA + H2O + H(+) = 4-hydroxybenzalacetone + 2 CO2 + 2 CoA. It carries out the reaction (E)-4-coumaroyl-CoA + 3 malonyl-CoA + 3 H(+) = 2',4,4',6'-tetrahydroxychalcone + 3 CO2 + 4 CoA. The protein operates within secondary metabolite biosynthesis; flavonoid biosynthesis. With respect to regulation, inhibited by glutathione. Functionally, bifunctional polyketide synthase producing both 4-hydroxybenzalacetone and naringenin chalcone. Can use p-coumaryl-CoA and ferulyl-CoA as substrates. Catalyzes the initial key reaction step in the biosynthesis of phenylbutanoids. The polypeptide is Polyketide synthase 4 (PKS4) (Rubus idaeus (Raspberry)).